A 72-amino-acid polypeptide reads, in one-letter code: uncharacterized protein (72 aa).

The protein belongs to the ycf76 family.

It is found in the plastid. It localises to the chloroplast. This is an uncharacterized protein from Oryza nivara (Indian wild rice).